Consider the following 153-residue polypeptide: Transcriptional repressor NrdR (153 aa).

Residues 3 to 34 (CPFCNSTDTQVKDSRSIENDMLIRRRRVCLVC) fold into a zinc finger. Residues 49 to 139 (FMVVKKNGET…VYMNFRNIND (91 aa)) form the ATP-cone domain.

It belongs to the NrdR family. The cofactor is Zn(2+).

Functionally, negatively regulates transcription of bacterial ribonucleotide reductase nrd genes and operons by binding to NrdR-boxes. The protein is Transcriptional repressor NrdR of Ehrlichia chaffeensis (strain ATCC CRL-10679 / Arkansas).